The following is a 448-amino-acid chain: Glutamyl-tRNA reductase (448 aa).

Substrate contacts are provided by residues 49-52 (TCNR), S109, 114-116 (ETQ), and Q120. C50 acts as the Nucleophile in catalysis. 189-194 (GAGEMS) is a binding site for NADP(+).

It belongs to the glutamyl-tRNA reductase family. In terms of assembly, homodimer.

The enzyme catalyses (S)-4-amino-5-oxopentanoate + tRNA(Glu) + NADP(+) = L-glutamyl-tRNA(Glu) + NADPH + H(+). The protein operates within porphyrin-containing compound metabolism; protoporphyrin-IX biosynthesis; 5-aminolevulinate from L-glutamyl-tRNA(Glu): step 1/2. Its function is as follows. Catalyzes the NADPH-dependent reduction of glutamyl-tRNA(Glu) to glutamate 1-semialdehyde (GSA). This Staphylococcus aureus (strain Mu3 / ATCC 700698) protein is Glutamyl-tRNA reductase.